The following is a 591-amino-acid chain: Tricyclene synthase, chloroplastic (591 aa).

The transit peptide at 1–45 (MATLLQIGSGVIYSNALRKTLRRPQSSTCIIVTETTPCNKSPTVQ) directs the protein to the chloroplast. (2E)-geranyl diphosphate-binding residues include Arg-302, Asp-339, Asp-343, Arg-481, and Asn-484. Asp-339 and Asp-343 together coordinate Mg(2+). A DDXXD motif motif is present at residues 339–343 (DDIYD). Residues Asn-484, Thr-488, and Glu-492 each coordinate Mg(2+).

Belongs to the terpene synthase family. Tpsb subfamily. Mg(2+) is required as a cofactor. The cofactor is Mn(2+). Predominantly expressed in flowers but also in leaves, siliques and in stems.

The protein localises to the plastid. It is found in the chloroplast stroma. It catalyses the reaction (2E)-geranyl diphosphate = beta-myrcene + diphosphate. The enzyme catalyses (2E)-geranyl diphosphate = tricyclene + diphosphate. It carries out the reaction (2E)-geranyl diphosphate = (E)-beta-ocimene + diphosphate. It participates in secondary metabolite biosynthesis; terpenoid biosynthesis. Functionally, involved in monoterpene (C10) biosynthesis. The major product is beta-myrcene (56%) followed by (E)-beta-ocimene (20%) and minor amounts (less than 5%) of the cyclic monoterpene (-)-limonene, (+)-limonene, 2-carene and tricyclene. This Arabidopsis thaliana (Mouse-ear cress) protein is Tricyclene synthase, chloroplastic.